Here is a 449-residue protein sequence, read N- to C-terminus: UNC93-like protein MFSD11 (449 aa).

Residues Leu8–Cys28 form a helical membrane-spanning segment. A glycan (N-linked (GlcNAc...) asparagine) is linked at Asn40. 5 helical membrane passes run Ala53–Val73, Gly74–Asn94, Pro96–Trp116, Ile138–Trp158, and Arg170–Ile190. Ser204 carries the phosphoserine modification. A run of 6 helical transmembrane segments spans residues Met239–Val259, Leu277–Gly297, Pro309–Met329, Phe359–Leu379, Ala385–Tyr405, and Leu410–Phe430.

Belongs to the unc-93 family.

It localises to the membrane. The protein is UNC93-like protein MFSD11 (MFSD11) of Pongo abelii (Sumatran orangutan).